The sequence spans 399 residues: CCA-adding enzyme (399 aa).

Positions 32 and 35 each coordinate ATP. CTP-binding residues include Gly32 and Arg35. The Mg(2+) site is built by Asp45 and Asp47. Arg116, Asp159, Arg162, Arg165, and Arg168 together coordinate ATP. The CTP site is built by Arg116, Asp159, Arg162, Arg165, and Arg168.

This sequence belongs to the tRNA nucleotidyltransferase/poly(A) polymerase family. Bacterial CCA-adding enzyme type 3 subfamily. As to quaternary structure, homodimer. Requires Mg(2+) as cofactor.

It catalyses the reaction a tRNA precursor + 2 CTP + ATP = a tRNA with a 3' CCA end + 3 diphosphate. It carries out the reaction a tRNA with a 3' CCA end + 2 CTP + ATP = a tRNA with a 3' CCACCA end + 3 diphosphate. Catalyzes the addition and repair of the essential 3'-terminal CCA sequence in tRNAs without using a nucleic acid template. Adds these three nucleotides in the order of C, C, and A to the tRNA nucleotide-73, using CTP and ATP as substrates and producing inorganic pyrophosphate. tRNA 3'-terminal CCA addition is required both for tRNA processing and repair. Also involved in tRNA surveillance by mediating tandem CCA addition to generate a CCACCA at the 3' terminus of unstable tRNAs. While stable tRNAs receive only 3'-terminal CCA, unstable tRNAs are marked with CCACCA and rapidly degraded. The polypeptide is CCA-adding enzyme (Streptococcus sanguinis (strain SK36)).